Consider the following 262-residue polypeptide: Glutamate racemase (262 aa).

Residues Asp5–Ser6 and Tyr37–Gly38 each bind substrate. Catalysis depends on Cys69, which acts as the Proton donor/acceptor. Asn70–Thr71 serves as a coordination point for substrate. The active-site Proton donor/acceptor is Cys181. Thr182 to His183 serves as a coordination point for substrate.

It belongs to the aspartate/glutamate racemases family.

The enzyme catalyses L-glutamate = D-glutamate. Its pathway is cell wall biogenesis; peptidoglycan biosynthesis. Functionally, provides the (R)-glutamate required for cell wall biosynthesis. In Buchnera aphidicola subsp. Acyrthosiphon pisum (strain APS) (Acyrthosiphon pisum symbiotic bacterium), this protein is Glutamate racemase.